The sequence spans 395 residues: S-adenosylmethionine synthase (395 aa).

H16 contacts ATP. D18 contributes to the Mg(2+) binding site. E44 serves as a coordination point for K(+). L-methionine contacts are provided by E57 and Q100. Residues 100 to 110 (QSPDIAQGVDD) form a flexible loop region. ATP contacts are provided by residues 174–176 (DAK), 241–242 (RF), D250, 256–257 (RK), A273, and K277. D250 lines the L-methionine pocket. K281 lines the L-methionine pocket.

This sequence belongs to the AdoMet synthase family. In terms of assembly, homotetramer; dimer of dimers. The cofactor is Mg(2+). It depends on K(+) as a cofactor.

The protein localises to the cytoplasm. The enzyme catalyses L-methionine + ATP + H2O = S-adenosyl-L-methionine + phosphate + diphosphate. The protein operates within amino-acid biosynthesis; S-adenosyl-L-methionine biosynthesis; S-adenosyl-L-methionine from L-methionine: step 1/1. In terms of biological role, catalyzes the formation of S-adenosylmethionine (AdoMet) from methionine and ATP. The overall synthetic reaction is composed of two sequential steps, AdoMet formation and the subsequent tripolyphosphate hydrolysis which occurs prior to release of AdoMet from the enzyme. The chain is S-adenosylmethionine synthase from Lactiplantibacillus plantarum (strain ATCC BAA-793 / NCIMB 8826 / WCFS1) (Lactobacillus plantarum).